A 1187-amino-acid chain; its full sequence is Phospholipid-transporting ATPase IH (1187 aa).

Residues 1–61 (MDCSLLRTLV…SSKYTFWNFI (61 aa)) lie on the Cytoplasmic side of the membrane. A helical transmembrane segment spans residues 62–82 (PKNLFEQFRRIANFYFLIIFL). Residues 83-88 (VQLIID) are Extracellular-facing. The helical transmembrane segment at 89 to 110 (TPTSPVTSGLPLFFVITVTAIK) threads the bilayer. Residues 111–296 (QGYEDWLRHK…SAVEKSMNTF (186 aa)) are Cytoplasmic-facing. A helical transmembrane segment spans residues 297-318 (LIVYLCILVSKALINTVLKYVW). The Extracellular portion of the chain corresponds to 319–349 (QSEPFRDEPWYNEKTESERQRNLFLRAFTDF). A helical membrane pass occupies residues 350–372 (LAFMVLFNYIIPVSMYVTVEMQK). Over 373 to 884 (FLGSYFITWD…GHFYYIRISE (512 aa)) the chain is Cytoplasmic. The 4-aspartylphosphate intermediate role is filled by aspartate 414. Aspartate 414, lysine 415, threonine 416, glutamate 513, phenylalanine 555, lysine 578, arginine 609, threonine 689, glycine 690, and aspartate 691 together coordinate ATP. Position 414 (aspartate 414) interacts with Mg(2+). Threonine 416 provides a ligand contact to Mg(2+). Serine 740 is subject to Phosphoserine. Residues arginine 801 and lysine 807 each coordinate ATP. Aspartate 828 contacts Mg(2+). ATP contacts are provided by asparagine 831 and aspartate 832. Aspartate 832 serves as a coordination point for Mg(2+). A helical membrane pass occupies residues 885 to 905 (LVQYFFYKNVCFIFPQFLYQF). The Extracellular portion of the chain corresponds to 906–917 (FCGFSQQTLYDT). A helical transmembrane segment spans residues 918-937 (AYLTLYNISFTSLPILLYSL). The Cytoplasmic portion of the chain corresponds to 938–967 (MEQHVGIDVLKRDPTLYRDIAKNALLRWRV). A helical membrane pass occupies residues 968–989 (FIYWTFLGVFDALVFFFGAYFI). At 990–1003 (FENTTVTINGQMFG) the chain is on the extracellular side. A helical transmembrane segment spans residues 1004 to 1026 (NWTFGTLVFTVMVLTVTLKLALD). At 1027-1032 (THYWTW) the chain is on the cytoplasmic side. A helical membrane pass occupies residues 1033-1053 (INHFVIWGSLLFYIAFSLLWG). Over 1054–1071 (GVIWPFLSYQRMYYVFIS) the chain is Extracellular. The chain crosses the membrane as a helical span at residues 1072-1096 (MLSSGPAWLGIILLVTVGLLPDVLK). Over 1097 to 1138 (KVLCRQLWPTATERTQNIQHQDSISEFTPLASLPSWGAQGSR) the chain is Cytoplasmic. Phosphoserine is present on residues serine 1148 and serine 1158.

It belongs to the cation transport ATPase (P-type) (TC 3.A.3) family. Type IV subfamily. In terms of assembly, component of a P4-ATPase flippase complex which consists of a catalytic alpha subunit ATP11A and an accessory beta subunit TMEM30A. It depends on Mg(2+) as a cofactor. Proteolytically cleaved by CASP3. In terms of tissue distribution, widely expressed. Expressed in myoblasts. Expressed in retina, brain, liver, testes and kidney (at protein level). Expressed in the inner ear.

The protein localises to the cell membrane. It localises to the early endosome. It is found in the recycling endosome. The protein resides in the endoplasmic reticulum membrane. It catalyses the reaction ATP + H2O + phospholipidSide 1 = ADP + phosphate + phospholipidSide 2.. The enzyme catalyses a 1,2-diacyl-sn-glycero-3-phospho-L-serine(out) + ATP + H2O = a 1,2-diacyl-sn-glycero-3-phospho-L-serine(in) + ADP + phosphate + H(+). The catalysed reaction is a 1,2-diacyl-sn-glycero-3-phosphoethanolamine(out) + ATP + H2O = a 1,2-diacyl-sn-glycero-3-phosphoethanolamine(in) + ADP + phosphate + H(+). Functionally, catalytic component of a P4-ATPase flippase complex which catalyzes the hydrolysis of ATP coupled to the transport of aminophospholipids, phosphatidylserines (PS) and phosphatidylethanolamines (PE), from the outer to the inner leaflet of the plasma membrane. Does not show flippase activity toward phosphatidylcholine (PC). Contributes to the maintenance of membrane lipid asymmetry with a specific role in morphogenesis of muscle cells. In myoblasts, mediates PS enrichment at the inner leaflet of plasma membrane, triggering PIEZO1-dependent Ca2+ influx and Rho GTPases signal transduction, subsequently leading to the assembly of cortical actomyosin fibers and myotube formation. The protein is Phospholipid-transporting ATPase IH (Atp11a) of Mus musculus (Mouse).